The primary structure comprises 116 residues: Toxin CSTX-10 (116 aa).

The signal sequence occupies residues 1-20 (MKVLVIFAVLSLVIFSNCSA). Residues 21-47 (ETDEDFFGEESFEADDIIPFIAKEQVR) constitute a propeptide that is removed on maturation. Disulfide bonds link Cys-53–Cys-68, Cys-60–Cys-77, Cys-67–Cys-94, and Cys-79–Cys-92.

As to expression, expressed by the venom gland.

The protein resides in the secreted. It localises to the target cell membrane. Spider venom toxin that shows calcium channel blocking activity and exhibits cytolytic activity by affecting the outer leaflet curvature and/or pore formation across the membrane. It blocks L-type calcium channels (Cav1/CACNA1) in mammalian neurons at nanomolar concentrations. Furthermore, it produces a slow voltage-independent block of mid/low and high voltage-activated calcium channels in cockroach neurons. Potassium ions, histamine, M-ctenitoxin-Cs1a (AC P83619), CSTX-9 (AC P58604), and CSTX-13 (AC P83919) synergistically increase the insecticidal activity of this toxin. In vivo, it causes paralysis in blow flies and provokes death in drosophila. The protein is Toxin CSTX-10 of Cupiennius salei (American wandering spider).